Reading from the N-terminus, the 207-residue chain is Claudin-11 (207 aa).

Residue methionine 1 is a topological domain, cytoplasmic. The helical transmembrane segment at 2–22 threads the bilayer; sequence VATCLQVVGFVTSFVGWIGII. At 23–82 the chain is on the extracellular side; that stretch reads VTTSTNDWVVTCSYTIPTCRKMDELGSKGLWADCVMATGLHHCKPLVDILILPGYAQACR. Residues 83-103 form a helical membrane-spanning segment; the sequence is ALMIAASVLGLPGILLLLTVL. Topologically, residues 104 to 122 are cytoplasmic; that stretch reads PCIRMGHEPGVAKYRRAQL. Residues 123 to 143 traverse the membrane as a helical segment; it reads AGVLLILLALCAIVATIWFPV. Residues 144-157 lie on the Extracellular side of the membrane; sequence CAHREITIVSFGYS. A helical transmembrane segment spans residues 158–178; it reads LYAGWIGAVMCLVGGCVIVCC. Topologically, residues 179-207 are cytoplasmic; sequence SGDAQSFGENRFYYSSGSSSPTHAKSAHV. A phosphoserine mark is found at serine 193, serine 194, serine 197, and serine 198.

It belongs to the claudin family. As to quaternary structure, interacts with tetraspanin-3/TSPAN3. Interacts with OCLN.

The protein resides in the cell junction. The protein localises to the tight junction. It localises to the cell membrane. Functionally, plays a major role in tight junction-specific obliteration of the intercellular space, through calcium-independent cell-adhesion activity. The sequence is that of Claudin-11 (Cldn11) from Rattus norvegicus (Rat).